The sequence spans 364 residues: UDP-N-acetylglucosamine--N-acetylmuramyl-(pentapeptide) pyrophosphoryl-undecaprenol N-acetylglucosamine transferase (364 aa).

UDP-N-acetyl-alpha-D-glucosamine is bound by residues 10 to 12, Asn123, Ser198, Ile251, and Gln296; that span reads TGG.

It belongs to the glycosyltransferase 28 family. MurG subfamily.

It is found in the cell membrane. It catalyses the reaction di-trans,octa-cis-undecaprenyl diphospho-N-acetyl-alpha-D-muramoyl-L-alanyl-D-glutamyl-meso-2,6-diaminopimeloyl-D-alanyl-D-alanine + UDP-N-acetyl-alpha-D-glucosamine = di-trans,octa-cis-undecaprenyl diphospho-[N-acetyl-alpha-D-glucosaminyl-(1-&gt;4)]-N-acetyl-alpha-D-muramoyl-L-alanyl-D-glutamyl-meso-2,6-diaminopimeloyl-D-alanyl-D-alanine + UDP + H(+). It functions in the pathway cell wall biogenesis; peptidoglycan biosynthesis. Cell wall formation. Catalyzes the transfer of a GlcNAc subunit on undecaprenyl-pyrophosphoryl-MurNAc-pentapeptide (lipid intermediate I) to form undecaprenyl-pyrophosphoryl-MurNAc-(pentapeptide)GlcNAc (lipid intermediate II). This Exiguobacterium sibiricum (strain DSM 17290 / CCUG 55495 / CIP 109462 / JCM 13490 / 255-15) protein is UDP-N-acetylglucosamine--N-acetylmuramyl-(pentapeptide) pyrophosphoryl-undecaprenol N-acetylglucosamine transferase.